We begin with the raw amino-acid sequence, 391 residues long: NAD(P)H-quinone oxidoreductase subunit H, chloroplastic (391 aa).

This sequence belongs to the complex I 49 kDa subunit family. In terms of assembly, NDH is composed of at least 16 different subunits, 5 of which are encoded in the nucleus.

The protein resides in the plastid. The protein localises to the chloroplast thylakoid membrane. The enzyme catalyses a plastoquinone + NADH + (n+1) H(+)(in) = a plastoquinol + NAD(+) + n H(+)(out). It catalyses the reaction a plastoquinone + NADPH + (n+1) H(+)(in) = a plastoquinol + NADP(+) + n H(+)(out). Its function is as follows. NDH shuttles electrons from NAD(P)H:plastoquinone, via FMN and iron-sulfur (Fe-S) centers, to quinones in the photosynthetic chain and possibly in a chloroplast respiratory chain. The immediate electron acceptor for the enzyme in this species is believed to be plastoquinone. Couples the redox reaction to proton translocation, and thus conserves the redox energy in a proton gradient. The sequence is that of NAD(P)H-quinone oxidoreductase subunit H, chloroplastic from Physcomitrium patens (Spreading-leaved earth moss).